An 87-amino-acid chain; its full sequence is uncharacterized protein (87 aa).

Residues 44–64 (DALYLAGSTIFTIVTTLVAWF) form a helical membrane-spanning segment.

The protein belongs to the SPP1 holin family.

It localises to the membrane. This is an uncharacterized protein from Bacillus licheniformis.